The following is a 382-amino-acid chain: Kelch domain-containing protein 3 (382 aa).

5 Kelch repeats span residues 25-77, 88-138, 139-189, 191-249, and 251-301; these read RVYS…PYMR, TVFL…VLGK, TMYI…TMLG, HMYV…GYNG, and LYIF…IVGD.

As to quaternary structure, component of a CRL2(KLHDC3) complex, also named ECS(KLHDC3) complex, composed of CUL2, Elongin BC (ELOB and ELOC), RBX1 and substrate-specific adapter KLHDC3. May form oligomers as a KLHDC3-ELOB-ELOC complex; this interaction is likely autoinhibitory for the E3 ligase complex.

The protein localises to the cytoplasm. Its pathway is protein modification; protein ubiquitination. Substrate-recognition component of a Cul2-RING (CRL2) E3 ubiquitin-protein ligase complex of the DesCEND (destruction via C-end degrons) pathway, which recognizes a C-degron located at the extreme C terminus of target proteins, leading to their ubiquitination and degradation. The C-degron recognized by the DesCEND pathway is usually a motif of less than ten residues and can be present in full-length proteins, truncated proteins or proteolytically cleaved forms. The CRL2(KLHDC3) complex specifically recognizes proteins with a glycine (Gly) at the C-terminus, leading to their ubiquitination and degradation: recognizes the C-terminal -Arg-(Xaa)n-Arg-Gly, -Arg-(Xaa)n-Lys-Gly, and -Arg-(Xaa)n-Gln-Gly degrons. The CRL2(KLHDC3) complex mediates ubiquitination and degradation of truncated SELENOV and SEPHS2 selenoproteins produced by failed UGA/Sec decoding, which end with a glycine. May be involved in meiotic recombination process. In Bos taurus (Bovine), this protein is Kelch domain-containing protein 3.